The chain runs to 631 residues: Extracellular metalloproteinase mep (631 aa).

The signal sequence occupies residues 1-19 (MHGLRLVCSIGTLPLVILA). A propeptide spanning residues 20–241 (YPAASLHTTS…VHGVVDYVAD (222 aa)) is cleaved from the precursor. N-linked (GlcNAc...) asparagine glycosylation is found at N282, N332, and N364. H425 is a binding site for Zn(2+). E426 is a catalytic residue. H429 is a Zn(2+) binding site. N-linked (GlcNAc...) asparagine glycans are attached at residues N470 and N505.

Belongs to the peptidase M36 family. Zn(2+) is required as a cofactor.

It localises to the secreted. Secreted metalloproteinase that allows assimilation of proteinaceous substrates. This is Extracellular metalloproteinase mep (mep) from Aspergillus niger (strain ATCC MYA-4892 / CBS 513.88 / FGSC A1513).